Consider the following 242-residue polypeptide: Probable transcriptional regulatory protein Bphy_2064 (242 aa).

The protein belongs to the TACO1 family.

The protein resides in the cytoplasm. The polypeptide is Probable transcriptional regulatory protein Bphy_2064 (Paraburkholderia phymatum (strain DSM 17167 / CIP 108236 / LMG 21445 / STM815) (Burkholderia phymatum)).